A 166-amino-acid chain; its full sequence is UPF0134 protein MPN_138 (166 aa).

This sequence belongs to the UPF0134 family.

This Mycoplasma pneumoniae (strain ATCC 29342 / M129 / Subtype 1) (Mycoplasmoides pneumoniae) protein is UPF0134 protein MPN_138.